Here is a 626-residue protein sequence, read N- to C-terminus: Basic helix-loop-helix ARNT-like protein 1 (626 aa).

The disordered stretch occupies residues 1-58 (MADQRMDISSTISDFMSPGPTDLLSSSLGTSGVDCNRKRKGSATDYQESMDTDKDDPH). Ser-17 bears the Phosphoserine; by GSK3-beta mark. Residues 17–32 (SPGPTDLLSSSLGTSG) show a composition bias toward low complexity. Phosphothreonine; by GSK3-beta is present on Thr-21. The Nuclear localization signal motif lies at 36 to 41 (NRKRKG). The 54-residue stretch at 72–125 (NAREAHSQIEKRRRDKMNSFIDELASLVPTCNAMSRKLDKLTVLRMAVQHMKTL) folds into the bHLH domain. Ser-78 bears the Phosphoserine mark. Ser-90 is subject to Phosphoserine; by CK2. The Nuclear export signal 1 motif lies at 142 to 152 (LSDDELKHLIL). The 73-residue stretch at 143–215 (SDDELKHLIL…EQLSSSDTAP (73 aa)) folds into the PAS 1 domain. Lys-252 is covalently cross-linked (Glycyl lysine isopeptide (Lys-Gly) (interchain with G-Cter in SUMO2 and SUMO3)). Lys-259 participates in a covalent cross-link: Glycyl lysine isopeptide (Lys-Gly) (interchain with G-Cter in SUMO); alternate. A Glycyl lysine isopeptide (Lys-Gly) (interchain with G-Cter in SUMO2); alternate cross-link involves residue Lys-259. A PAS 2 domain is found at 326–396 (PQPVNGEIRV…ECHRQVLQTR (71 aa)). Positions 361-369 (LAYLPQELL) match the Nuclear export signal 2 motif. One can recognise a PAC domain in the interval 401 to 444 (TNCYKFKIKDGSFITLRSRWFSFMNPWTKEVEYIVSTNTVVLAN). Disordered regions lie at residues 459-492 (SPHS…RAGA) and 511-595 (GSSP…SPSN). Residues 508–588 (RIRGSSPSSC…IGIDMIDNDQ (81 aa)) are interaction with CIART. Residues 511–521 (GSSPSSCGSSP) show a composition bias toward low complexity. Residue Lys-538 is modified to N6-acetyllysine.

Component of the circadian clock oscillator which includes the CRY1/2 proteins, CLOCK or NPAS2, BMAL1 or BMAL2, CSNK1D and/or CSNK1E, TIMELESS and the PER1/2/3 proteins. Forms a heterodimer with CLOCK. The CLOCK-BMAL1 heterodimer is required for E-box-dependent transactivation, for CLOCK nuclear translocation and degradation, and, for phosphorylation of both CLOCK and BMAL1. Part of a nuclear complex which also includes RACK1 and PRKCA; RACK1 and PRKCA are recruited to the complex in a circadian manner. Interacts with NPAS2. Interacts with EZH2. Interacts with SUMO3. Interacts with SIRT1. Interacts with AHR. Interacts with ID1, ID2 and ID3. Interacts with DDX4. Interacts with OGT. Interacts with EED and SUZ12. Interacts with MTA1. Interacts with CIART. Interacts with HSP90. Interacts with KAT2B and EP300. Interacts with BHLHE40/DEC1 and BHLHE41/DEC2. Interacts with RELB and the interaction is enhanced in the presence of CLOCK. Interacts with PER1, PER2, CRY1 and CRY2 and this interaction requires a translocation to the nucleus. Interaction of the CLOCK-BMAL1 heterodimer with PER or CRY inhibits transcription activation. Interaction of the CLOCK-BMAL1 with CRY1 is independent of DNA but with PER2 is off DNA. The CLOCK-BMAL1 heterodimer interacts with GSK3B. Interacts with KDM5A. Interacts with KMT2A; in a circadian manner. Interacts with UBE3A. Interacts with PRKCG. Interacts with MAGEL2. Interacts with NCOA2. Interacts with THRAP3. The CLOCK-BMAL1 heterodimer interacts with PASD1. Interacts with PASD1. Interacts with USP9X. Interacts with PIWIL2 (via PIWI domain). Interacts with HDAC3. Interacts with HNF4A. Post-translationally, ubiquitinated, leading to its proteasomal degradation. Deubiquitinated by USP9X. O-glycosylated; contains O-GlcNAc. O-glycosylation by OGT prevents protein degradation by inhibiting ubiquitination. It also stabilizes the CLOCK-BMAL1 heterodimer thereby increasing CLOCK-BMAL1-mediated transcription of genes in the negative loop of the circadian clock such as PER1/2/3 and CRY1/2. In terms of processing, acetylated on Lys-538 by CLOCK during the repression phase of the circadian cycle. Acetylation facilitates recruitment of CRY1 protein and initiates the repression phase of the circadian cycle. Acetylated at Lys-538 by KAT5 during the activation phase of the cycle, leading to recruitment of the positive transcription elongation factor b (P-TEFb) and BRD4, followed by productive elongation of circadian transcripts. Deacetylated by SIRT1, which may result in decreased protein stability. Post-translationally, phosphorylated upon dimerization with CLOCK. Phosphorylation enhances the transcriptional activity, alters the subcellular localization and decreases the stability of the CLOCK-BMAL1 heterodimer by promoting its degradation. Phosphorylation shows circadian variations in the liver with a peak between CT10 to CT14. Phosphorylation at Ser-90 by CK2 is essential for its nuclear localization, its interaction with CLOCK and controls CLOCK nuclear entry. Dephosphorylation at Ser-78 is important for dimerization with CLOCK and transcriptional activity. Sumoylated on Lys-259 upon dimerization with CLOCK. Predominantly conjugated to poly-SUMO2/3 rather than SUMO1 and the level of these conjugates undergo rhythmic variation, peaking at CT9-CT12. Sumoylation localizes it exclusively to the PML body and promotes its ubiquitination in the PML body, ubiquitin-dependent proteasomal degradation and the transcriptional activity of the CLOCK-BMAL1 heterodimer. In terms of processing, undergoes lysosome-mediated degradation in a time-dependent manner in the liver.

It localises to the nucleus. It is found in the cytoplasm. The protein resides in the PML body. In terms of biological role, transcriptional activator which forms a core component of the circadian clock. The circadian clock, an internal time-keeping system, regulates various physiological processes through the generation of approximately 24 hour circadian rhythms in gene expression, which are translated into rhythms in metabolism and behavior. It is derived from the Latin roots 'circa' (about) and 'diem' (day) and acts as an important regulator of a wide array of physiological functions including metabolism, sleep, body temperature, blood pressure, endocrine, immune, cardiovascular, and renal function. Consists of two major components: the central clock, residing in the suprachiasmatic nucleus (SCN) of the brain, and the peripheral clocks that are present in nearly every tissue and organ system. Both the central and peripheral clocks can be reset by environmental cues, also known as Zeitgebers (German for 'timegivers'). The predominant Zeitgeber for the central clock is light, which is sensed by retina and signals directly to the SCN. The central clock entrains the peripheral clocks through neuronal and hormonal signals, body temperature and feeding-related cues, aligning all clocks with the external light/dark cycle. Circadian rhythms allow an organism to achieve temporal homeostasis with its environment at the molecular level by regulating gene expression to create a peak of protein expression once every 24 hours to control when a particular physiological process is most active with respect to the solar day. Transcription and translation of core clock components (CLOCK, NPAS2, BMAL1, BMAL2, PER1, PER2, PER3, CRY1 and CRY2) plays a critical role in rhythm generation, whereas delays imposed by post-translational modifications (PTMs) are important for determining the period (tau) of the rhythms (tau refers to the period of a rhythm and is the length, in time, of one complete cycle). A diurnal rhythm is synchronized with the day/night cycle, while the ultradian and infradian rhythms have a period shorter and longer than 24 hours, respectively. Disruptions in the circadian rhythms contribute to the pathology of cardiovascular diseases, cancer, metabolic syndromes and aging. A transcription/translation feedback loop (TTFL) forms the core of the molecular circadian clock mechanism. Transcription factors, CLOCK or NPAS2 and BMAL1 or BMAL2, form the positive limb of the feedback loop, act in the form of a heterodimer and activate the transcription of core clock genes and clock-controlled genes (involved in key metabolic processes), harboring E-box elements (5'-CACGTG-3') within their promoters. The core clock genes: PER1/2/3 and CRY1/2 which are transcriptional repressors form the negative limb of the feedback loop and interact with the CLOCK|NPAS2-BMAL1|BMAL2 heterodimer inhibiting its activity and thereby negatively regulating their own expression. This heterodimer also activates nuclear receptors NR1D1/2 and RORA/B/G, which form a second feedback loop and which activate and repress BMAL1 transcription, respectively. BMAL1 positively regulates myogenesis and negatively regulates adipogenesis via the transcriptional control of the genes of the canonical Wnt signaling pathway. Plays a role in normal pancreatic beta-cell function; regulates glucose-stimulated insulin secretion via the regulation of antioxidant genes NFE2L2/NRF2 and its targets SESN2, PRDX3, CCLC and CCLM. Negatively regulates the mTORC1 signaling pathway; regulates the expression of MTOR and DEPTOR. Controls diurnal oscillations of Ly6C inflammatory monocytes; rhythmic recruitment of the PRC2 complex imparts diurnal variation to chemokine expression that is necessary to sustain Ly6C monocyte rhythms. Regulates the expression of HSD3B2, STAR, PTGS2, CYP11A1, CYP19A1 and LHCGR in the ovary and also the genes involved in hair growth. Plays an important role in adult hippocampal neurogenesis by regulating the timely entry of neural stem/progenitor cells (NSPCs) into the cell cycle and the number of cell divisions that take place prior to cell-cycle exit. Regulates the circadian expression of CIART and KLF11. The CLOCK-BMAL1 heterodimer regulates the circadian expression of SERPINE1/PAI1, VWF, B3, CCRN4L/NOC, NAMPT, DBP, MYOD1, PPARGC1A, PPARGC1B, SIRT1, GYS2, F7, NGFR, GNRHR, BHLHE40/DEC1, ATF4, MTA1, KLF10 and also genes implicated in glucose and lipid metabolism. Promotes rhythmic chromatin opening, regulating the DNA accessibility of other transcription factors. The NPAS2-BMAL1 heterodimer positively regulates the expression of MAOA, F7 and LDHA and modulates the circadian rhythm of daytime contrast sensitivity by regulating the rhythmic expression of adenylate cyclase type 1 (ADCY1) in the retina. The preferred binding motif for the CLOCK-BMAL1 heterodimer is 5'-CACGTGA-3', which contains a flanking adenine nucleotide at the 3-prime end of the canonical 6-nucleotide E-box sequence. CLOCK specifically binds to the half-site 5'-CAC-3', while BMAL1 binds to the half-site 5'-GTGA-3'. The CLOCK-BMAL1 heterodimer also recognizes the non-canonical E-box motifs 5'-AACGTGA-3' and 5'-CATGTGA-3'. Essential for the rhythmic interaction of CLOCK with ASS1 and plays a critical role in positively regulating CLOCK-mediated acetylation of ASS1. Plays a role in protecting against lethal sepsis by limiting the expression of immune checkpoint protein CD274 in macrophages in a PKM2-dependent manner. Regulates the diurnal rhythms of skeletal muscle metabolism via transcriptional activation of genes promoting triglyceride synthesis (DGAT2) and metabolic efficiency (COQ10B). The sequence is that of Basic helix-loop-helix ARNT-like protein 1 (BMAL1) from Mesocricetus auratus (Golden hamster).